Consider the following 826-residue polypeptide: Breast cancer anti-estrogen resistance protein 3 homolog (826 aa).

A2 carries the N-acetylalanine modification. A phosphoserine mark is found at S32, S78, S83, and S182. Residues 46 to 81 (SIHGTLPRKKKGPPPIRSCDNFSHVGTLPHSRSPRH) are disordered. The region spanning 154 to 253 (WYHGRIPRQV…QSGAIIFQPV (100 aa)) is the SH2 domain. The segment at 268–287 (ASSPDRAHEGSLTEGRPDAA) is disordered. S291 bears the Phosphoserine mark. Positions 294–321 (VGGTQAREQGLPRGNLLRNKEKSGSQPA) are disordered. At K335 the chain carries N6-methyllysine. Positions 348 to 406 (KLTPQSPSVGTSPCPNSPVFRTGSEPTLSPAVVRRVSSDARPGEALRGSDSQLCPKPPP) are disordered. Residues 350-361 (TPQSPSVGTSPC) show a composition bias toward polar residues. 4 positions are modified to phosphoserine: S359, S364, S376, and S472. The disordered stretch occupies residues 480–501 (DDDDRTRPWKPPPAPGDTVGED). One can recognise a Ras-GEF domain in the interval 549 to 819 (DPKVIAQHLL…TALSRKLEPP (271 aa)). The segment at 745 to 749 (LATAR) is mediates the interaction with BCAR1/p130CAS.

As to quaternary structure, part of a complex comprised of PTPRA, BCAR1, BCAR3 (via SH2 domain) and SRC; the formation of the complex is dependent on integrin mediated-tyrosine phosphorylation of PTPRA. Within the complex, interacts (via SH2 domain) with PTPRA (when phosphorylated on 'Tyr-797'). Interacts (via Ras-GEF domain) with BCAR1. Interacts (via Ras-GEF domain) with NEDD9. Interacts with PTK2/FAK1. Interacts with PTPN1. Interacts (via SH2 domain) with EGFR (when tyrosine-phosphorylated). Phosphorylated on tyrosine residues.

It is found in the cytoplasm. The protein resides in the cell junction. Its subcellular location is the focal adhesion. Functionally, acts as an adapter protein downstream of several growth factor receptors to promote cell proliferation, migration, and redistribution of actin fibers. Specifically involved in INS/insulin signaling pathway by mediating MAPK1/ERK2-MAPK3/ERK1 activation and DNA synthesis. Promotes insulin-mediated membrane ruffling. In response to vasoconstrictor peptide EDN1, involved in the activation of RAP1 downstream of PTK2B via interaction with phosphorylated BCAR1. Inhibits cell migration and invasion via regulation of TGFB-mediated matrix digestion, actin filament rearrangement, and inhibition of invadopodia activity. May inhibit TGFB-SMAD signaling, via facilitating BCAR1 and SMAD2 and/or SMAD3 interaction. Regulates EGF-induced DNA synthesis. Required for the maintenance of ocular lens morphology and structural integrity, potentially via regulation of focal adhesion complex signaling. Acts upstream of PTPRA to regulate the localization of BCAR1 and PTPRA to focal adhesions, via regulation of SRC-mediated phosphorylation of PTPRA. Positively regulates integrin-induced tyrosine phosphorylation of BCAR1. Acts as a guanine nucleotide exchange factor (GEF) for small GTPases RALA, RAP1A and RRAS. However, in a contrasting study, lacks GEF activity towards RAP1. This chain is Breast cancer anti-estrogen resistance protein 3 homolog (BCAR3), found in Bos taurus (Bovine).